A 331-amino-acid polypeptide reads, in one-letter code: Beta-ketoacyl-[acyl-carrier-protein] synthase III (331 aa).

Catalysis depends on residues C115 and H255. An ACP-binding region spans residues 256–260 (QANFR). Residue N285 is part of the active site.

The protein belongs to the thiolase-like superfamily. FabH family. In terms of assembly, homodimer.

The protein localises to the cytoplasm. It carries out the reaction malonyl-[ACP] + acetyl-CoA + H(+) = 3-oxobutanoyl-[ACP] + CO2 + CoA. It participates in lipid metabolism; fatty acid biosynthesis. In terms of biological role, catalyzes the condensation reaction of fatty acid synthesis by the addition to an acyl acceptor of two carbons from malonyl-ACP. Catalyzes the first condensation reaction which initiates fatty acid synthesis and may therefore play a role in governing the total rate of fatty acid production. Possesses both acetoacetyl-ACP synthase and acetyl transacylase activities. Its substrate specificity determines the biosynthesis of branched-chain and/or straight-chain of fatty acids. This Helicobacter pylori (strain Shi470) protein is Beta-ketoacyl-[acyl-carrier-protein] synthase III.